The following is a 132-amino-acid chain: Small ribosomal subunit protein uS8 (132 aa).

It belongs to the universal ribosomal protein uS8 family. In terms of assembly, part of the 30S ribosomal subunit. Contacts proteins S5 and S12.

In terms of biological role, one of the primary rRNA binding proteins, it binds directly to 16S rRNA central domain where it helps coordinate assembly of the platform of the 30S subunit. The polypeptide is Small ribosomal subunit protein uS8 (Streptococcus uberis (strain ATCC BAA-854 / 0140J)).